Consider the following 94-residue polypeptide: Co-chaperonin GroES (94 aa).

Belongs to the GroES chaperonin family. Heptamer of 7 subunits arranged in a ring. Interacts with the chaperonin GroEL.

The protein localises to the cytoplasm. Together with the chaperonin GroEL, plays an essential role in assisting protein folding. The GroEL-GroES system forms a nano-cage that allows encapsulation of the non-native substrate proteins and provides a physical environment optimized to promote and accelerate protein folding. GroES binds to the apical surface of the GroEL ring, thereby capping the opening of the GroEL channel. This is Co-chaperonin GroES from Streptococcus agalactiae.